We begin with the raw amino-acid sequence, 184 residues long: NADH-quinone oxidoreductase subunit B (184 aa).

Positions 37, 38, 103, and 132 each coordinate [4Fe-4S] cluster.

Belongs to the complex I 20 kDa subunit family. NDH-1 is composed of 14 different subunits. Subunits NuoB, C, D, E, F, and G constitute the peripheral sector of the complex. [4Fe-4S] cluster serves as cofactor.

Its subcellular location is the cell membrane. The catalysed reaction is a quinone + NADH + 5 H(+)(in) = a quinol + NAD(+) + 4 H(+)(out). Its function is as follows. NDH-1 shuttles electrons from NADH, via FMN and iron-sulfur (Fe-S) centers, to quinones in the respiratory chain. The immediate electron acceptor for the enzyme in this species is believed to be a menaquinone. Couples the redox reaction to proton translocation (for every two electrons transferred, four hydrogen ions are translocated across the cytoplasmic membrane), and thus conserves the redox energy in a proton gradient. The polypeptide is NADH-quinone oxidoreductase subunit B (Mycolicibacterium smegmatis (strain ATCC 700084 / mc(2)155) (Mycobacterium smegmatis)).